Here is a 209-residue protein sequence, read N- to C-terminus: uncharacterized protein (209 aa).

The signal sequence occupies residues 1–19 (MGYFPYLAVFVCLLASGDA). N-linked (GlcNAc...) asparagine glycosylation is found at N41 and N109.

In terms of tissue distribution, component of the acid-soluble organic matrix of prismatic shell layers (at protein level).

It is found in the secreted. This is an uncharacterized protein from Haliotis asinina (Donkey's ear abalone).